We begin with the raw amino-acid sequence, 912 residues long: Putative respiratory burst oxidase homolog protein J (912 aa).

2 disordered regions span residues 1–51 (MKNN…GGGI) and 73–112 (WRKSGNLGSPSTRKSGNLGPPLPVSQVKRPGPQRVERTTS). Residues 1–323 (MKNNKKVGTE…VVVTAELMYE (323 aa)) are Cytoplasmic-facing. 2 stretches are compositionally biased toward polar residues: residues 29 to 44 (SVKQPESTINSNNPES) and 78 to 87 (NLGSPSTRKS). EF-hand-like regions lie at residues 147–155 (AVDGRLPKD) and 181–193 (RQIKTENGIDKEQ). The EF-hand domain occupies 205–240 (DLDCRLQIFFDMCDKDGDGKLTEEEVKEVIVLSASA). Ca(2+)-binding residues include Asp218, Asp220, Asp222, Lys224, and Glu229. A Phosphoserine modification is found at Ser294. The helical transmembrane segment at 324 to 344 (HWKKIWVVTLWLAVNVVLFMW) threads the bilayer. Over 345 to 363 (KYEEFTTSPLYNITGRCLC) the chain is Extracellular. A helical membrane pass occupies residues 364–384 (AAKGTAEILKLNMALILVPVL). The 158-residue stretch at 366–523 (KGTAEILKLN…LLVIAYALLI (158 aa)) folds into the Ferric oxidoreductase domain. Over 385–410 (RRTLTFLRSTFLNHLIPFDDNINFHK) the chain is Cytoplasmic. A helical transmembrane segment spans residues 411-431 (LIAVAIAVISLLHTALHMLCN). Over 432-458 (YPRLSSCPYNFYSDYAGNLLGAKQPTY) the chain is Extracellular. A helical transmembrane segment spans residues 459-479 (LGLMLTPVSVTGVLMIIFMGI). The Cytoplasmic segment spans residues 480–510 (SFTLAMHYFRRNIVKLPIPFNRLAGFNSFWY). A helical transmembrane segment spans residues 511 to 531 (AHHLLVIAYALLIIHGYILII). Residues 532–697 (EKPWYQKTTW…PYGAPAQSYQ (166 aa)) lie on the Extracellular side of the membrane. An FAD-binding FR-type domain is found at 562–695 (EHNHRVHIIK…KGPYGAPAQS (134 aa)). Residues 698–718 (KFDILLLIGLGIGATPFISIL) traverse the membrane as a helical segment. The Cytoplasmic segment spans residues 719–912 (KDMLNNLKPG…TRFTFHKENF (194 aa)).

Belongs to the RBOH (TC 5.B.1.3) family. As to quaternary structure, monomer and homodimer.

The protein resides in the membrane. Functionally, calcium-dependent NADPH oxidase that generates superoxide. This Arabidopsis thaliana (Mouse-ear cress) protein is Putative respiratory burst oxidase homolog protein J (RBOHJ).